A 466-amino-acid chain; its full sequence is 3-isopropylmalate dehydratase large subunit (466 aa).

The [4Fe-4S] cluster site is built by Cys347, Cys407, and Cys410.

The protein belongs to the aconitase/IPM isomerase family. LeuC type 1 subfamily. Heterodimer of LeuC and LeuD. The cofactor is [4Fe-4S] cluster.

The enzyme catalyses (2R,3S)-3-isopropylmalate = (2S)-2-isopropylmalate. It functions in the pathway amino-acid biosynthesis; L-leucine biosynthesis; L-leucine from 3-methyl-2-oxobutanoate: step 2/4. Its function is as follows. Catalyzes the isomerization between 2-isopropylmalate and 3-isopropylmalate, via the formation of 2-isopropylmaleate. The protein is 3-isopropylmalate dehydratase large subunit of Escherichia coli (strain 55989 / EAEC).